The following is a 256-amino-acid chain: Small ribosomal subunit protein uS2 (256 aa).

The protein belongs to the universal ribosomal protein uS2 family.

This chain is Small ribosomal subunit protein uS2, found in Brucella melitensis biotype 1 (strain ATCC 23456 / CCUG 17765 / NCTC 10094 / 16M).